A 947-amino-acid polypeptide reads, in one-letter code: DNA topoisomerase 1 (947 aa).

Positions 16–140 (RRLVIVESPT…VKRMVFHEIT (125 aa)) constitute a Toprim domain. Mg(2+) is bound by residues Glu-22 and Asp-109. In terms of domain architecture, Topo IA-type catalytic spans 155 to 614 (DIDLVDAQET…FYFGGNHGVS (460 aa)). The segment at 189–194 (SAGRVQ) is interaction with DNA. Tyr-343 acts as the O-(5'-phospho-DNA)-tyrosine intermediate in catalysis. Disordered stretches follow at residues 733-771 (VLPKHDDDYGAADQGTKKTKKGRRASASQGPKPRTGSLL), 846-888 (KRAG…GETN), and 910-947 (ADRRARGPVKRPAKKARKVPAKKAARLAPARGISQSPR). Basic residues predominate over residues 915–934 (RGPVKRPAKKARKVPAKKAA).

This sequence belongs to the type IA topoisomerase family. In terms of assembly, monomer. It depends on Mg(2+) as a cofactor.

The catalysed reaction is ATP-independent breakage of single-stranded DNA, followed by passage and rejoining.. Releases the supercoiling and torsional tension of DNA, which is introduced during the DNA replication and transcription, by transiently cleaving and rejoining one strand of the DNA duplex. Introduces a single-strand break via transesterification at a target site in duplex DNA. The scissile phosphodiester is attacked by the catalytic tyrosine of the enzyme, resulting in the formation of a DNA-(5'-phosphotyrosyl)-enzyme intermediate and the expulsion of a 3'-OH DNA strand. The free DNA strand then undergoes passage around the unbroken strand, thus removing DNA supercoils. Finally, in the religation step, the DNA 3'-OH attacks the covalent intermediate to expel the active-site tyrosine and restore the DNA phosphodiester backbone. This is DNA topoisomerase 1 from Mycobacterium leprae (strain TN).